Here is a 324-residue protein sequence, read N- to C-terminus: tRNA-modifying protein YgfZ (324 aa).

Trp-186 is a folate binding site.

Belongs to the tRNA-modifying YgfZ family.

The protein resides in the cytoplasm. In terms of biological role, folate-binding protein involved in regulating the level of ATP-DnaA and in the modification of some tRNAs. It is probably a key factor in regulatory networks that act via tRNA modification, such as initiation of chromosomal replication. This Colwellia psychrerythraea (strain 34H / ATCC BAA-681) (Vibrio psychroerythus) protein is tRNA-modifying protein YgfZ.